The following is an 89-amino-acid chain: MALSAAEKSAIVKEYQTAETDTGSPEVQVALLTANINKLQGHFSDHKQDHHSRRGLIRMVNQRRKLLDYLKGKNVERYASLIQRLGLRR.

It belongs to the universal ribosomal protein uS15 family. In terms of assembly, part of the 30S ribosomal subunit. Forms a bridge to the 50S subunit in the 70S ribosome, contacting the 23S rRNA.

One of the primary rRNA binding proteins, it binds directly to 16S rRNA where it helps nucleate assembly of the platform of the 30S subunit by binding and bridging several RNA helices of the 16S rRNA. Functionally, forms an intersubunit bridge (bridge B4) with the 23S rRNA of the 50S subunit in the ribosome. The chain is Small ribosomal subunit protein uS15 from Saccharophagus degradans (strain 2-40 / ATCC 43961 / DSM 17024).